The chain runs to 197 residues: Holliday junction branch migration complex subunit RuvA (197 aa).

The interval 1–63 (MYAYLKGIIT…EDAHLLYGFR (63 aa)) is domain I. A domain II region spans residues 64-142 (SEDEKKLFLS…VAGDGLPAKV (79 aa)). Positions 143 to 147 (AVQAS) are flexible linker. A domain III region spans residues 148 to 197 (AENQELEEAMEAMLALGYKATELKKIKKFFEGTTDTAENYIKSALKMLVK).

It belongs to the RuvA family. As to quaternary structure, homotetramer. Forms an RuvA(8)-RuvB(12)-Holliday junction (HJ) complex. HJ DNA is sandwiched between 2 RuvA tetramers; dsDNA enters through RuvA and exits via RuvB. An RuvB hexamer assembles on each DNA strand where it exits the tetramer. Each RuvB hexamer is contacted by two RuvA subunits (via domain III) on 2 adjacent RuvB subunits; this complex drives branch migration. In the full resolvosome a probable DNA-RuvA(4)-RuvB(12)-RuvC(2) complex forms which resolves the HJ.

The protein localises to the cytoplasm. The RuvA-RuvB-RuvC complex processes Holliday junction (HJ) DNA during genetic recombination and DNA repair, while the RuvA-RuvB complex plays an important role in the rescue of blocked DNA replication forks via replication fork reversal (RFR). RuvA specifically binds to HJ cruciform DNA, conferring on it an open structure. The RuvB hexamer acts as an ATP-dependent pump, pulling dsDNA into and through the RuvAB complex. HJ branch migration allows RuvC to scan DNA until it finds its consensus sequence, where it cleaves and resolves the cruciform DNA. In Streptococcus pneumoniae serotype 2 (strain D39 / NCTC 7466), this protein is Holliday junction branch migration complex subunit RuvA.